Here is a 468-residue protein sequence, read N- to C-terminus: V-type proton ATPase subunit S1 (468 aa).

Residues 1-35 (MMAATAAAQVRAGTRWAPALCRMPWLPLMLVAAAA) form the signal peptide. The propeptide occupies 36 to 228 (ATSEQQVPLV…TAVRPSRVAR (193 aa)). Over 36 to 417 (ATSEQQVPLV…KKFSYASDCA (382 aa)) the chain is Lumenal. N-linked (GlcNAc...) asparagine glycosylation is found at asparagine 167, asparagine 258, asparagine 271, asparagine 294, asparagine 301, asparagine 348, asparagine 355, and asparagine 404. An intrachain disulfide couples cysteine 369 to cysteine 416. A helical transmembrane segment spans residues 418-438 (GFFSPGIWMGLLTSLFMLFIF). Topologically, residues 439 to 468 (TYGLHMILSLKTMDRFDDHKGPTITLTQIV) are cytoplasmic.

This sequence belongs to the vacuolar ATPase subunit S1 family. As to quaternary structure, accessory component of the multisubunit proton-transporting vacuolar (V)-ATPase protein pump. Interacts (via N-terminus) with ATP6AP2 (via N-terminus). Interacts with RNASEK. Interacts with TMEM106B (via C-terminus). In terms of processing, N-glycosylated.

The protein resides in the endoplasmic reticulum membrane. The protein localises to the endoplasmic reticulum-Golgi intermediate compartment membrane. It localises to the cytoplasmic vesicle. It is found in the secretory vesicle. Its subcellular location is the synaptic vesicle membrane. The protein resides in the clathrin-coated vesicle membrane. Accessory subunit of the proton-transporting vacuolar (V)-ATPase protein pump, which is required for luminal acidification of secretory vesicles. Guides the V-type ATPase into specialized subcellular compartments, such as neuroendocrine regulated secretory vesicles or the ruffled border of the osteoclast, thereby regulating its activity. Involved in membrane trafficking and Ca(2+)-dependent membrane fusion. May play a role in the assembly of the V-type ATPase complex. In aerobic conditions, involved in intracellular iron homeostasis, thus triggering the activity of Fe(2+) prolyl hydroxylase (PHD) enzymes, and leading to HIF1A hydroxylation and subsequent proteasomal degradation. In islets of Langerhans cells, may regulate the acidification of dense-core secretory granules. This Bos taurus (Bovine) protein is V-type proton ATPase subunit S1 (ATP6AP1).